The following is a 167-amino-acid chain: Transcription antitermination protein NusB (167 aa).

Positions Met-1–Arg-32 are disordered.

It belongs to the NusB family.

In terms of biological role, involved in transcription antitermination. Required for transcription of ribosomal RNA (rRNA) genes. Binds specifically to the boxA antiterminator sequence of the ribosomal RNA (rrn) operons. This chain is Transcription antitermination protein NusB, found in Cupriavidus pinatubonensis (strain JMP 134 / LMG 1197) (Cupriavidus necator (strain JMP 134)).